The chain runs to 168 residues: Putative adenylate kinase (168 aa).

ATP-binding residues include Gly-10, Gly-12, Lys-13, Thr-14, and Thr-15. The NMP stretch occupies residues 28 to 51 (HLNERIREEGLDAGRDEERDSLVA). The segment at 97–107 (DRGEPAAKAAE) is LID. Arg-98 contributes to the ATP binding site.

It belongs to the adenylate kinase family. AK6 subfamily. In terms of assembly, interacts with uS11. Not a structural component of 40S pre-ribosomes, but transiently interacts with them by binding to uS11.

The enzyme catalyses AMP + ATP = 2 ADP. It catalyses the reaction ATP + H2O = ADP + phosphate + H(+). Its function is as follows. Broad-specificity nucleoside monophosphate (NMP) kinase that catalyzes the reversible transfer of the terminal phosphate group between nucleoside triphosphates and monophosphates. Also has ATPase activity. Involved in the late maturation steps of the 30S ribosomal particles, specifically 16S rRNA maturation. While NMP activity is not required for ribosome maturation, ATPase activity is. Associates transiently with small ribosomal subunit protein uS11. ATP hydrolysis breaks the interaction with uS11. May temporarily remove uS11 from the ribosome to enable a conformational change of the ribosomal RNA that is needed for the final maturation step of the small ribosomal subunit. The protein is Putative adenylate kinase of Natronomonas pharaonis (strain ATCC 35678 / DSM 2160 / CIP 103997 / JCM 8858 / NBRC 14720 / NCIMB 2260 / Gabara) (Halobacterium pharaonis).